We begin with the raw amino-acid sequence, 271 residues long: TIP41-like protein (271 aa).

Lysine 106 bears the N6-acetyllysine mark. Residues 173–271 form an interaction with PPP2CA region; it reads RVMPSSFFLL…PVDSESAPSE (99 aa). A phosphoserine mark is found at serine 265 and serine 270.

Belongs to the TIP41 family. Interacts with PPP2CA. Interacts with PPP2CB, PPP4C and PPP6C. Interacts with IGBP1; the interaction is dependent on PPP2CA. Associates with a protein phosphatase 2A PP2A(C):IGBP1 complex. Interacts with PPP4C and PPP4R2.

It is found in the cytoplasm. Functionally, may be a allosteric regulator of serine/threonine-protein phosphatase 2A (PP2A). Inhibits catalytic activity of the PP2A(D) core complex in vitro. The PP2A(C):TIPRL complex does not show phosphatase activity. Acts as a negative regulator of serine/threonine-protein phosphatase 4 probably by inhibiting the formation of the active PPP4C:PPP4R2 complex; the function is proposed to implicate it in DNA damage response by promoting H2AX phosphorylated on Ser-140 (gamma-H2AX). May play a role in the regulation of ATM/ATR signaling pathway controlling DNA replication and repair. This is TIP41-like protein (Tiprl) from Rattus norvegicus (Rat).